The chain runs to 281 residues: uncharacterized protein (281 aa).

A helical transmembrane segment spans residues 5 to 27 (AYVTVIYGNNIYLTGALVLGYTL).

It localises to the membrane. This is an uncharacterized protein from Acanthamoeba polyphaga mimivirus (APMV).